The chain runs to 152 residues: Snaclec coagulation factor IX/factor X-binding protein subunit A (152 aa).

The signal sequence occupies residues 1-23; that stretch reads MGRFIFMSFGLLVVAASLRGTGA. The 129-residue stretch at 24–152 folds into the C-type lectin domain; that stretch reads DCLSGWSSYE…GQQNPFVCEA (129 aa). Intrachain disulfides connect Cys-25–Cys-36, Cys-53–Cys-150, and Cys-125–Cys-142. Ca(2+) contacts are provided by Ser-64, Glu-66, and Glu-70. Position 151 (Glu-151) interacts with Ca(2+).

This sequence belongs to the snaclec family. In terms of assembly, heterodimer of subunits A and B; disulfide-linked. In terms of tissue distribution, expressed by the venom gland.

The protein localises to the secreted. In terms of biological role, anticoagulant protein which binds to the gamma-carboxyglutamic acid-domain regions of factors IX (F9) and factor X (F10) in the presence of calcium with a 1 to 1 stoichiometry. The protein is Snaclec coagulation factor IX/factor X-binding protein subunit A of Protobothrops flavoviridis (Habu).